The sequence spans 348 residues: Rhodopsin (348 aa).

The residue at position 1 (methionine 1) is an N-acetylmethionine. Topologically, residues 1-36 (MNGTEGLNFYVPFSNKTGVVRSPFEYPQYYLAEPWQ) are extracellular. Residues asparagine 2 and asparagine 15 are each glycosylated (N-linked (GlcNAc...) asparagine). The helical transmembrane segment at 37–61 (FSVLAAYMFLLIVLGFPINFLTLYV) threads the bilayer. The Cytoplasmic portion of the chain corresponds to 62–73 (TVQHKKLRTPLN). A helical membrane pass occupies residues 74 to 96 (YIPLNLAVANLFMVFGGFTTTLY). Residues 97–110 (TSLHAYFVFGPTGC) lie on the Extracellular side of the membrane. An intrachain disulfide couples cysteine 110 to cysteine 187. A helical membrane pass occupies residues 111-133 (NLEGFFATLGGEIALWSLVVLAI). The 'Ionic lock' involved in activated form stabilization signature appears at 134 to 136 (ERY). The Cytoplasmic portion of the chain corresponds to 134–152 (ERYVVVCKPMSNFRFGENH). Residues 153 to 173 (AIMGLALTWVMAMACAAPPLV) form a helical membrane-spanning segment. The Extracellular portion of the chain corresponds to 174–202 (GWSRYIPEGMQCSCGIDYYTSRQEVNNES). Residue glutamate 201 participates in Zn(2+) binding. A helical transmembrane segment spans residues 203 to 224 (FVIYMFVVHFTIPLVIIFFCYG). The Cytoplasmic portion of the chain corresponds to 225 to 252 (QLVFTVKEAAAQQQESATTQKAEKEVTR). The chain crosses the membrane as a helical span at residues 253 to 274 (MVIIMVVAFLICWVPYASVAFY). At 275–286 (IFTHQGSDFGPI) the chain is on the extracellular side. Residue glutamine 279 coordinates Zn(2+). The helical transmembrane segment at 287 to 308 (FMTIPSFFAKSSSIYNPVIYIM) threads the bilayer. At lysine 296 the chain carries N6-(retinylidene)lysine. At 309-348 (MNKQLRNCMLTTLCCGRNPLGDDEASTTASKTETSQVAPA) the chain is on the cytoplasmic side. Residues cysteine 322 and cysteine 323 are each lipidated (S-palmitoyl cysteine). An interaction with SAG region spans residues 330 to 348 (DDEASTTASKTETSQVAPA). Residue serine 334 is modified to Phosphoserine. Threonine 335 and threonine 336 each carry phosphothreonine. Position 338 is a phosphoserine (serine 338). Phosphothreonine occurs at positions 340 and 342. At serine 343 the chain carries Phosphoserine.

It belongs to the G-protein coupled receptor 1 family. Opsin subfamily. Homodimer. May form a complex composed of RHO, GRK1 and RCVRN in a Ca(2+)-dependent manner; RCVRN prevents the interaction between GRK1 and RHO. Interacts with GRK1. Interacts (phosphorylated form) with SAG. Interacts with GNAT1. Interacts with GNAT3. SAG and G-proteins compete for a common binding site. Interacts with PRCD; the interaction promotes PRCD stability. Forms a complex with ASAP1 and ARF4. Forms a complex with ASAP1, RAB11A, Rabin8/RAB3IP, ARF4 and RAB11FIP3; the complex regulates Golgi-to-cilia rhodopsin/RHO transport in photoreceptors. Post-translationally, phosphorylated on some or all of the serine and threonine residues present in the C-terminal region. Contains one covalently linked retinal chromophore. Upon light absorption, the covalently bound 11-cis-retinal is converted to all-trans-retinal. After hydrolysis of the Schiff base and release of the covalently bound all-trans-retinal, active rhodopsin is regenerated by binding of a fresh molecule of 11-cis-retinal.

The protein localises to the membrane. The protein resides in the cell projection. It is found in the cilium. It localises to the photoreceptor outer segment. Photoreceptor required for image-forming vision at low light intensity. Required for photoreceptor cell viability after birth. Light-induced isomerization of 11-cis to all-trans retinal triggers a conformational change that activates signaling via G-proteins. Subsequent receptor phosphorylation mediates displacement of the bound G-protein alpha subunit by the arrestin SAG and terminates signaling. This Globicephala melas (Long-finned pilot whale) protein is Rhodopsin (RHO).